We begin with the raw amino-acid sequence, 111 residues long: MIGTGGFIGASLRYTISSRVPKIQNIPAGTLTVNLLGSIVLALLTFSSEPESVVYLVNIGMLGSFTTFSTFAYETFRLLEDGQNISFFLNIFLNVMLCLLGVSIAYLALML.

A run of 3 helical transmembrane segments spans residues 26–46 (IPAGTLTVNLLGSIVLALLTF), 53–73 (VVYLVNIGMLGSFTTFSTFAY), and 91–111 (IFLNVMLCLLGVSIAYLALML). Glycine 63 and threonine 66 together coordinate Na(+).

This sequence belongs to the fluoride channel Fluc/FEX (TC 1.A.43) family.

Its subcellular location is the cell membrane. The enzyme catalyses fluoride(in) = fluoride(out). Its activity is regulated as follows. Na(+) is not transported, but it plays an essential structural role and its presence is essential for fluoride channel function. Functionally, fluoride-specific ion channel. Important for reducing fluoride concentration in the cell, thus reducing its toxicity. The chain is Fluoride-specific ion channel FluC 3 from Methanosarcina acetivorans (strain ATCC 35395 / DSM 2834 / JCM 12185 / C2A).